Here is a 163-residue protein sequence, read N- to C-terminus: Probable chemoreceptor glutamine deamidase CheD (163 aa).

It belongs to the CheD family.

The catalysed reaction is L-glutaminyl-[protein] + H2O = L-glutamyl-[protein] + NH4(+). Probably deamidates glutamine residues to glutamate on methyl-accepting chemotaxis receptors (MCPs), playing an important role in chemotaxis. This is Probable chemoreceptor glutamine deamidase CheD from Borrelia turicatae (strain 91E135).